The chain runs to 461 residues: Phosphomethylpyrimidine synthase (461 aa).

Residues Asn80, Met109, Tyr139, His175, 195-197, 236-239, and Glu275 each bind substrate; these read SRG and DSLR. His279 lines the Zn(2+) pocket. Tyr302 provides a ligand contact to substrate. His343 lines the Zn(2+) pocket. Positions 423, 426, and 431 each coordinate [4Fe-4S] cluster.

This sequence belongs to the ThiC family. Requires [4Fe-4S] cluster as cofactor.

It catalyses the reaction 5-amino-1-(5-phospho-beta-D-ribosyl)imidazole + S-adenosyl-L-methionine = 4-amino-2-methyl-5-(phosphooxymethyl)pyrimidine + CO + 5'-deoxyadenosine + formate + L-methionine + 3 H(+). It functions in the pathway cofactor biosynthesis; thiamine diphosphate biosynthesis. In terms of biological role, catalyzes the synthesis of the hydroxymethylpyrimidine phosphate (HMP-P) moiety of thiamine from aminoimidazole ribotide (AIR) in a radical S-adenosyl-L-methionine (SAM)-dependent reaction. This chain is Phosphomethylpyrimidine synthase, found in Picosynechococcus sp. (strain ATCC 27264 / PCC 7002 / PR-6) (Agmenellum quadruplicatum).